We begin with the raw amino-acid sequence, 155 residues long: Transcription antitermination protein NusB (155 aa).

The protein belongs to the NusB family.

In terms of biological role, involved in transcription antitermination. Required for transcription of ribosomal RNA (rRNA) genes. Binds specifically to the boxA antiterminator sequence of the ribosomal RNA (rrn) operons. This is Transcription antitermination protein NusB from Vibrio atlanticus (strain LGP32) (Vibrio splendidus (strain Mel32)).